The sequence spans 217 residues: Orotate phosphoribosyltransferase (217 aa).

Position 26 (lysine 26) interacts with 5-phospho-alpha-D-ribose 1-diphosphate. Position 34–35 (phenylalanine 34–phenylalanine 35) interacts with orotate. 5-phospho-alpha-D-ribose 1-diphosphate is bound by residues tyrosine 72–lysine 73, arginine 99, lysine 100, lysine 103, histidine 105, and aspartate 124–alanine 132. Residues threonine 128 and arginine 156 each coordinate orotate.

The protein belongs to the purine/pyrimidine phosphoribosyltransferase family. PyrE subfamily. Homodimer. Mg(2+) serves as cofactor.

It carries out the reaction orotidine 5'-phosphate + diphosphate = orotate + 5-phospho-alpha-D-ribose 1-diphosphate. It functions in the pathway pyrimidine metabolism; UMP biosynthesis via de novo pathway; UMP from orotate: step 1/2. Functionally, catalyzes the transfer of a ribosyl phosphate group from 5-phosphoribose 1-diphosphate to orotate, leading to the formation of orotidine monophosphate (OMP). This Aeromonas salmonicida (strain A449) protein is Orotate phosphoribosyltransferase.